Consider the following 331-residue polypeptide: Holliday junction branch migration complex subunit RuvB (331 aa).

Residues 1–182 (MDDRMVDQAL…FGVHLRLEYY (182 aa)) are large ATPase domain (RuvB-L). Residues Leu-21, Arg-22, Gly-63, Lys-66, Thr-67, Thr-68, 129–131 (EDF), Arg-172, Tyr-182, and Arg-219 each bind ATP. Thr-67 lines the Mg(2+) pocket. The small ATPAse domain (RuvB-S) stretch occupies residues 183–253 (NENDLKEIII…TTKQALQLLQ (71 aa)). A head domain (RuvB-H) region spans residues 256 to 331 (AEGLDYIDHK…AYEHFKNFNK (76 aa)). DNA is bound by residues Arg-292, Arg-311, and Arg-316.

Belongs to the RuvB family. Homohexamer. Forms an RuvA(8)-RuvB(12)-Holliday junction (HJ) complex. HJ DNA is sandwiched between 2 RuvA tetramers; dsDNA enters through RuvA and exits via RuvB. An RuvB hexamer assembles on each DNA strand where it exits the tetramer. Each RuvB hexamer is contacted by two RuvA subunits (via domain III) on 2 adjacent RuvB subunits; this complex drives branch migration. In the full resolvosome a probable DNA-RuvA(4)-RuvB(12)-RuvC(2) complex forms which resolves the HJ.

The protein localises to the cytoplasm. The catalysed reaction is ATP + H2O = ADP + phosphate + H(+). The RuvA-RuvB-RuvC complex processes Holliday junction (HJ) DNA during genetic recombination and DNA repair, while the RuvA-RuvB complex plays an important role in the rescue of blocked DNA replication forks via replication fork reversal (RFR). RuvA specifically binds to HJ cruciform DNA, conferring on it an open structure. The RuvB hexamer acts as an ATP-dependent pump, pulling dsDNA into and through the RuvAB complex. RuvB forms 2 homohexamers on either side of HJ DNA bound by 1 or 2 RuvA tetramers; 4 subunits per hexamer contact DNA at a time. Coordinated motions by a converter formed by DNA-disengaged RuvB subunits stimulates ATP hydrolysis and nucleotide exchange. Immobilization of the converter enables RuvB to convert the ATP-contained energy into a lever motion, pulling 2 nucleotides of DNA out of the RuvA tetramer per ATP hydrolyzed, thus driving DNA branch migration. The RuvB motors rotate together with the DNA substrate, which together with the progressing nucleotide cycle form the mechanistic basis for DNA recombination by continuous HJ branch migration. Branch migration allows RuvC to scan DNA until it finds its consensus sequence, where it cleaves and resolves cruciform DNA. The sequence is that of Holliday junction branch migration complex subunit RuvB from Staphylococcus haemolyticus (strain JCSC1435).